A 927-amino-acid chain; its full sequence is Translation initiation factor IF-2 (927 aa).

The tract at residues 27–338 (LGLPVKSHAS…APKPVTERKF (312 aa)) is disordered. The span at 49–69 (SFSSSKTKAPTNSVQTNQGVK) shows a compositional bias: polar residues. Composition is skewed to basic and acidic residues over residues 70–86 (TESKTVETKQGLSDDKP) and 101–138 (FKAEREARAKAEAEKRQHNGDHRKNNRHNDTRSDDRRH). Low complexity predominate over residues 146-159 (GNRNDNRQGQQNNR). 3 stretches are compositionally biased toward basic and acidic residues: residues 160-171 (NKNDGRYADHKQ), 202-226 (YSRHSEQRFREEQEAKRQAAKEQEL), and 234-257 (AQEEAQKAKEKLASKPVAKVKEIV). The span at 300 to 316 (NWNNQNQVRNQRNSNWN) shows a compositional bias: low complexity. Residues 428–597 (ERPPVVTIMG…LLVAEMEELK (170 aa)) enclose the tr-type G domain. The G1 stretch occupies residues 437–444 (GHVDHGKT). 437–444 (GHVDHGKT) lines the GTP pocket. Residues 462 to 466 (GITQH) form a G2 region. The segment at 483–486 (DTPG) is G3. Residues 483 to 487 (DTPGH) and 537 to 540 (NKID) each bind GTP. The tract at residues 537–540 (NKID) is G4. The segment at 573 to 575 (SAK) is G5.

Belongs to the TRAFAC class translation factor GTPase superfamily. Classic translation factor GTPase family. IF-2 subfamily.

It localises to the cytoplasm. In terms of biological role, one of the essential components for the initiation of protein synthesis. Protects formylmethionyl-tRNA from spontaneous hydrolysis and promotes its binding to the 30S ribosomal subunits. Also involved in the hydrolysis of GTP during the formation of the 70S ribosomal complex. This chain is Translation initiation factor IF-2, found in Streptococcus agalactiae serotype Ia (strain ATCC 27591 / A909 / CDC SS700).